Reading from the N-terminus, the 328-residue chain is Ketol-acid reductoisomerase (NADP(+)) (328 aa).

Residues 2-181 (AKIYRETDAD…GFTRVGVIET (180 aa)) form the KARI N-terminal Rossmann domain. NADP(+) is bound by residues 25-28 (YGIQ), Arg48, Ser52, and 82-85 (DMVQ). Residue His107 is part of the active site. Residue Gly133 coordinates NADP(+). Positions 182 to 327 (TFAEETETDL…EDLRRLMRSG (146 aa)) constitute a KARI C-terminal knotted domain. Residues Asp190, Glu194, Glu226, and Glu230 each contribute to the Mg(2+) site. Ser251 serves as a coordination point for substrate.

This sequence belongs to the ketol-acid reductoisomerase family. It depends on Mg(2+) as a cofactor.

It carries out the reaction (2R)-2,3-dihydroxy-3-methylbutanoate + NADP(+) = (2S)-2-acetolactate + NADPH + H(+). It catalyses the reaction (2R,3R)-2,3-dihydroxy-3-methylpentanoate + NADP(+) = (S)-2-ethyl-2-hydroxy-3-oxobutanoate + NADPH + H(+). It participates in amino-acid biosynthesis; L-isoleucine biosynthesis; L-isoleucine from 2-oxobutanoate: step 2/4. The protein operates within amino-acid biosynthesis; L-valine biosynthesis; L-valine from pyruvate: step 2/4. Its function is as follows. Involved in the biosynthesis of branched-chain amino acids (BCAA). Catalyzes an alkyl-migration followed by a ketol-acid reduction of (S)-2-acetolactate (S2AL) to yield (R)-2,3-dihydroxy-isovalerate. In the isomerase reaction, S2AL is rearranged via a Mg-dependent methyl migration to produce 3-hydroxy-3-methyl-2-ketobutyrate (HMKB). In the reductase reaction, this 2-ketoacid undergoes a metal-dependent reduction by NADPH to yield (R)-2,3-dihydroxy-isovalerate. The sequence is that of Ketol-acid reductoisomerase (NADP(+)) from Caldivirga maquilingensis (strain ATCC 700844 / DSM 13496 / JCM 10307 / IC-167).